Here is an 84-residue protein sequence, read N- to C-terminus: Putative ribosomal RNA large subunit methyltransferase H 2 (84 aa).

Residues glycine 33 and 52-57 (FSKMTF) each bind S-adenosyl-L-methionine.

It belongs to the RNA methyltransferase RlmH family. Homodimer.

The protein localises to the cytoplasm. It carries out the reaction pseudouridine(1915) in 23S rRNA + S-adenosyl-L-methionine = N(3)-methylpseudouridine(1915) in 23S rRNA + S-adenosyl-L-homocysteine + H(+). Its function is as follows. Specifically methylates the pseudouridine at position 1915 (m3Psi1915) in 23S rRNA. The chain is Putative ribosomal RNA large subunit methyltransferase H 2 (rlmH2) from Clostridium perfringens (strain SM101 / Type A).